Reading from the N-terminus, the 238-residue chain is Riboflavin synthase (238 aa).

2 Lumazine-binding repeats span residues 1 to 103 (MFTG…FGGH) and 104 to 205 (YVQG…EKQI). Residues 4–6 (GIV), 54–56 (CLT), and 68–73 (GISPET) each bind 2,4-dihydroxypteridine. Serine 95 carries the phosphoserine modification. 2,4-dihydroxypteridine-binding positions include 107 to 109 (GHV), lysine 143, 152 to 154 (SLT), and 170 to 175 (SMIKHT).

As to quaternary structure, homotrimer.

The enzyme catalyses 2 6,7-dimethyl-8-(1-D-ribityl)lumazine + H(+) = 5-amino-6-(D-ribitylamino)uracil + riboflavin. It functions in the pathway cofactor biosynthesis; riboflavin biosynthesis; riboflavin from 2-hydroxy-3-oxobutyl phosphate and 5-amino-6-(D-ribitylamino)uracil: step 2/2. Its function is as follows. Catalyzes the dismutation of two molecules of 6,7-dimethyl-8-ribityllumazine, resulting in the formation of riboflavin and 5-amino-6-(D-ribitylamino)uracil. The sequence is that of Riboflavin synthase from Saccharomyces cerevisiae (strain ATCC 204508 / S288c) (Baker's yeast).